Consider the following 192-residue polypeptide: Small ribosomal subunit protein uS4c-2 (192 aa).

An S4 RNA-binding domain is found at 91-155 (TRLDHLVYRA…PKPPEYLPPY (65 aa)).

It belongs to the universal ribosomal protein uS4 family. Part of the 30S ribosomal subunit. Contacts protein S5. The interaction surface between S4 and S5 is involved in control of translational fidelity.

Its subcellular location is the plastid. It is found in the chloroplast. Functionally, one of the primary rRNA binding proteins, it binds directly to 16S rRNA where it nucleates assembly of the body of the 30S subunit. With S5 and S12 plays an important role in translational accuracy. This chain is Small ribosomal subunit protein uS4c-2, found in Cyanidium caldarium (Red alga).